Reading from the N-terminus, the 122-residue chain is Large ribosomal subunit protein uL14 (122 aa).

Belongs to the universal ribosomal protein uL14 family. As to quaternary structure, part of the 50S ribosomal subunit. Forms a cluster with proteins L3 and L19. In the 70S ribosome, L14 and L19 interact and together make contacts with the 16S rRNA in bridges B5 and B8.

Its function is as follows. Binds to 23S rRNA. Forms part of two intersubunit bridges in the 70S ribosome. The polypeptide is Large ribosomal subunit protein uL14 (Methylobacillus flagellatus (strain ATCC 51484 / DSM 6875 / VKM B-1610 / KT)).